The following is a 1131-amino-acid chain: MSSKKFNQVDKGRGMISENYIEPAFLLPDLIEIQRSSFRWFLEEGLIEELNSFSPITDYTGKLELHFLGHNYKLKEPKYSVEEAKRRDSTYAVQMYVPTRLLNKETGDIKEQEVFIGDLPLMTDRGTFIINGAERVIVNQIVRSPGVYYKSEIDKNGRRTYSASLIPNRGAWLKFETDRNDLVWVRIDKTRKLSAQVLLKALGLSDNEIFDALRHPEYFQKTIEKEGQFSEEEALMELYRKLRPGEPPTVLGGQQLLDSRFFDPKRYDLGRVGRYKLNKKLRLSVPDTVRVLTSGDILAAVDYLINLEYDIGSIDDIDHLGNRRVRSVGELLQNQVRVGLNRLERIIRERMTVSDAEVLTPASLVNPKPLVAAIKEFFGSSQLSQFMDQTNPLAELTHKRRLSALGPGGLTRERAGFAVRDIHPSHYGRICPIETPEGPNAGLIGSLATHARVNQYGFLETPFRPVENGRVRFDQPAAYMTADEEDDLRVAPGDIPVDENGYIIGPQVPVRYRQEFSTTTPEQVDYVAVSPVQIVSVATSMIPFLEHDDANRALMGSNMQRQAVPLLKPERPLVGTGLEAQGARDSGMVIVSRTDGDVVYVDATEIRVRVSGQLPTASGKSTDNGQLTSQKGQEIRYTVSKYQRSNQDTCLNQKPLVRIGERVVAGQVLADGSSTEGGELALGQNIVVAYMPWEGYNYEDAILISERLVQDDIYTSIHIEKYEIEARQTKLGPEEITREIPNVGEDALRQLDEQGIIRIGAWVEAGDILVGKVTPKGESDQPPEEKLLRAIFGEKARDVRDNSLRVPNGEKGRVVDVRLFTREQGDELPPGANMVVRVYVAQKRKIQVGDKMAGRHGNKGIISRILPIEDMPYLPDGSPVDIVLNPLGVPSRMNVGQVFECLLGWAGHTLGVRFKITPFDEMYGEESSRRIVHGKLQEARDETGKDWVYNPDDPGKIMVYDGRTGEAFDRPVTIGVAYMLKLVHLVDDKIHARSTGPYSLVTQQPLGGKAQQGGQRFGEMEVWALEAFGAAYTLQELLTVKSDDMQGRNEALNAIVKGKAIPRPGTPESFKVLMRELQSLGLDIAVHKVETQADGSSLDVEVDLMADQLARRTPPRPTYESLSRESLDDDE.

The tract at residues 1108–1131 (QLARRTPPRPTYESLSRESLDDDE) is disordered. The span at 1122–1131 (LSRESLDDDE) shows a compositional bias: basic and acidic residues.

It belongs to the RNA polymerase beta chain family. In terms of assembly, in cyanobacteria the RNAP catalytic core is composed of 2 alpha, 1 beta, 1 beta', 1 gamma and 1 omega subunit. When a sigma factor is associated with the core the holoenzyme is formed, which can initiate transcription.

It catalyses the reaction RNA(n) + a ribonucleoside 5'-triphosphate = RNA(n+1) + diphosphate. DNA-dependent RNA polymerase catalyzes the transcription of DNA into RNA using the four ribonucleoside triphosphates as substrates. The sequence is that of DNA-directed RNA polymerase subunit beta from Nostoc sp. (strain PCC 7120 / SAG 25.82 / UTEX 2576).